The chain runs to 456 residues: High mobility group B protein 6 (456 aa).

Disordered stretches follow at residues Met-1–Lys-42, Ser-117–Ser-142, Ala-238–Pro-258, and Met-349–Phe-389. The segment covering Lys-11–Lys-21 has biased composition (basic residues). The segment at residues Thr-138 to Lys-206 is a DNA-binding region (HMG box 1). The segment covering Gln-240–Lys-254 has biased composition (basic and acidic residues). The segment at residues Pro-255–Lys-321 is a DNA-binding region (HMG box 2). The span at Glu-354–Glu-363 shows a compositional bias: basic and acidic residues. Residues Pro-379 to Asn-447 constitute a DNA-binding region (HMG box 3).

It is found in the nucleus. This Arabidopsis thaliana (Mouse-ear cress) protein is High mobility group B protein 6 (HMGB6).